Reading from the N-terminus, the 203-residue chain is Outer-membrane lipoprotein carrier protein (203 aa).

Positions 1–21 are cleaved as a signal peptide; it reads MKKWLAISCLIAGVTSTAVYA.

The protein belongs to the LolA family. As to quaternary structure, monomer.

The protein resides in the periplasm. Participates in the translocation of lipoproteins from the inner membrane to the outer membrane. Only forms a complex with a lipoprotein if the residue after the N-terminal Cys is not an aspartate (The Asp acts as a targeting signal to indicate that the lipoprotein should stay in the inner membrane). This chain is Outer-membrane lipoprotein carrier protein, found in Pectobacterium atrosepticum (strain SCRI 1043 / ATCC BAA-672) (Erwinia carotovora subsp. atroseptica).